Reading from the N-terminus, the 297-residue chain is N-acetylneuraminate lyase (297 aa).

Aceneuramate contacts are provided by Ser47 and Thr48. The active-site Proton donor is Tyr137. Catalysis depends on Lys165, which acts as the Schiff-base intermediate with substrate. Residues Thr167, Gly189, Asp191, Glu192, and Ser208 each coordinate aceneuramate.

This sequence belongs to the DapA family. NanA subfamily. In terms of assembly, homotetramer.

The protein resides in the cytoplasm. It catalyses the reaction aceneuramate = aldehydo-N-acetyl-D-mannosamine + pyruvate. The protein operates within amino-sugar metabolism; N-acetylneuraminate degradation; D-fructose 6-phosphate from N-acetylneuraminate: step 1/5. In terms of biological role, catalyzes the reversible aldol cleavage of N-acetylneuraminic acid (sialic acid; Neu5Ac) to form pyruvate and N-acetylmannosamine (ManNAc) via a Schiff base intermediate. This chain is N-acetylneuraminate lyase, found in Escherichia coli O139:H28 (strain E24377A / ETEC).